The chain runs to 55 residues: Large ribosomal subunit protein bL33 (55 aa).

It belongs to the bacterial ribosomal protein bL33 family.

This Ruegeria sp. (strain TM1040) (Silicibacter sp.) protein is Large ribosomal subunit protein bL33.